Here is a 155-residue protein sequence, read N- to C-terminus: Protein PtsT (155 aa).

The sequence is that of Protein PtsT (ptsT) from Geobacillus stearothermophilus (Bacillus stearothermophilus).